The following is a 145-amino-acid chain: MYPAHLLVLLAVCVSLLGASTIPPLPLNLVQFTYLIQCANKGSRASYHYADYGCYCGAGGSGTPVDELDRCCKVHDDCYGEAEKMGCYPKLTMYNYYCGTEGPYCNTKTDCQRYVCACDLQAAKCFARSPYNNKNYNIDTSKRCK.

Positions 1–21 (MYPAHLLVLLAVCVSLLGAST) are cleaved as a signal peptide. Residues 22–27 (IPPLPL) constitute a propeptide that is removed on maturation. 7 disulfides stabilise this stretch: cysteine 38-cysteine 98, cysteine 54-cysteine 144, cysteine 56-cysteine 72, cysteine 71-cysteine 125, cysteine 78-cysteine 118, cysteine 87-cysteine 111, and cysteine 105-cysteine 116. Ca(2+)-binding residues include tyrosine 55, glycine 57, and glycine 59. The active site involves histidine 75. Ca(2+) is bound at residue aspartate 76. The active site involves aspartate 119.

This sequence belongs to the phospholipase A2 family. Group I subfamily. D49 sub-subfamily. The cofactor is Ca(2+). As to expression, expressed by the venom gland.

It localises to the secreted. The enzyme catalyses a 1,2-diacyl-sn-glycero-3-phosphocholine + H2O = a 1-acyl-sn-glycero-3-phosphocholine + a fatty acid + H(+). PLA2 catalyzes the calcium-dependent hydrolysis of the 2-acyl groups in 3-sn-phosphoglycerides. The protein is Basic phospholipase A2 cPt09 of Laticauda semifasciata (Black-banded sea krait).